The following is a 384-amino-acid chain: MLPVLPPALLALADGTTFLGTSIGAPGRTVGEVVFNTALTGYQEILTDPSYCRQIVTLTYPHIGNVGVNEEDVEAAKVHAAGLVIKDLPLRVSNFRAAMPLSQYLEREGTVAIAGIDTRRLTRVLRTTGAQNGCIVSFAPGTVVGEAEIAAAVAAAKAAPSMAGLDLAQVVSADAPYEWTETSWQLGRGHGTLADAEFHVVAYDFGVKRNILRLLADRGCRVTVVPARTPAAEVFKLKPDGVFLSNGPGDPEPCDYAIAAAREIIDAGVPTFGICLGHQIMALASGAKTFKMKFGHHGANHPVKDLDSGRVSITSQNHGFAVDEKTLGANLRPTHVSLFDGTLQGLARTDRPAFCFQGHPEASPGPHDIGYLFDRFVALMQERA.

Residues 1 to 195 (MLPVLPPALL…LGRGHGTLAD (195 aa)) are CPSase. L-glutamine-binding residues include Ser-50, Gly-247, and Gly-249. In terms of domain architecture, Glutamine amidotransferase type-1 spans 199–384 (HVVAYDFGVK…RFVALMQERA (186 aa)). The Nucleophile role is filled by Cys-275. 5 residues coordinate L-glutamine: Leu-276, Gln-279, Asn-317, Gly-319, and Phe-320. Active-site residues include His-359 and Glu-361.

The protein belongs to the CarA family. In terms of assembly, composed of two chains; the small (or glutamine) chain promotes the hydrolysis of glutamine to ammonia, which is used by the large (or ammonia) chain to synthesize carbamoyl phosphate. Tetramer of heterodimers (alpha,beta)4.

The enzyme catalyses hydrogencarbonate + L-glutamine + 2 ATP + H2O = carbamoyl phosphate + L-glutamate + 2 ADP + phosphate + 2 H(+). The catalysed reaction is L-glutamine + H2O = L-glutamate + NH4(+). It functions in the pathway amino-acid biosynthesis; L-arginine biosynthesis; carbamoyl phosphate from bicarbonate: step 1/1. The protein operates within pyrimidine metabolism; UMP biosynthesis via de novo pathway; (S)-dihydroorotate from bicarbonate: step 1/3. In terms of biological role, small subunit of the glutamine-dependent carbamoyl phosphate synthetase (CPSase). CPSase catalyzes the formation of carbamoyl phosphate from the ammonia moiety of glutamine, carbonate, and phosphate donated by ATP, constituting the first step of 2 biosynthetic pathways, one leading to arginine and/or urea and the other to pyrimidine nucleotides. The small subunit (glutamine amidotransferase) binds and cleaves glutamine to supply the large subunit with the substrate ammonia. The polypeptide is Carbamoyl phosphate synthase small chain (Rubrivivax gelatinosus (strain NBRC 100245 / IL144)).